We begin with the raw amino-acid sequence, 386 residues long: Microtubule-binding protein TANGLED1 (386 aa).

Disordered regions lie at residues 83–105 (RMRG…GVGG), 140–202 (AAGA…RVRS), 244–266 (HAST…QKRL), 303–330 (PARP…CSFS), and 345–386 (RLSL…ISSR). The span at 170–180 (RARRAREKQSH) shows a compositional bias: basic residues. Positions 181 to 193 (RGGAATRGADAAT) are enriched in low complexity. Polar residues predominate over residues 375 to 386 (TVRTVSSKISSR).

In terms of tissue distribution, expressed in vegetative shoot tips consisting of leaf primordia and the bases of immature leaves, the shoot apical meristem, and unexpanded stem tissue. Strongly expressed in tissues enriched in dividing cells: ear primordia and embryos.

It localises to the cytoplasm. The protein resides in the cytoskeleton. The protein localises to the spindle. It is found in the phragmoplast. Is required for spatial control cell division during leaf development. Through an association with microtubules, acts both for the positioning of cytoskeletal arrays that establish planes of cell division during prophase and for spatial guidance of expanding phragmoplasts toward preestablished cortical division sites (CDS) during cytokinesis. The sequence is that of Microtubule-binding protein TANGLED1 (TAN1) from Zea mays (Maize).